The chain runs to 615 residues: DNA mismatch repair protein MutL (615 aa).

Residues 370–397 (EPVAPRYTPAPASGSRPAAPWPNTQPGY) are disordered. Positions 378–391 (PAPASGSRPAAPWP) are enriched in low complexity.

The protein belongs to the DNA mismatch repair MutL/HexB family.

Functionally, this protein is involved in the repair of mismatches in DNA. It is required for dam-dependent methyl-directed DNA mismatch repair. May act as a 'molecular matchmaker', a protein that promotes the formation of a stable complex between two or more DNA-binding proteins in an ATP-dependent manner without itself being part of a final effector complex. The polypeptide is DNA mismatch repair protein MutL (Shigella dysenteriae serotype 1 (strain Sd197)).